The sequence spans 197 residues: Large ribosomal subunit protein bL25 (197 aa).

This sequence belongs to the bacterial ribosomal protein bL25 family. CTC subfamily. As to quaternary structure, part of the 50S ribosomal subunit; part of the 5S rRNA/L5/L18/L25 subcomplex. Contacts the 5S rRNA. Binds to the 5S rRNA independently of L5 and L18.

Functionally, this is one of the proteins that binds to the 5S RNA in the ribosome where it forms part of the central protuberance. This is Large ribosomal subunit protein bL25 from Lawsonia intracellularis (strain PHE/MN1-00).